Consider the following 544-residue polypeptide: Major royal jelly protein 3 (544 aa).

The first 20 residues, 1 to 20 (MTKWLLLVVCLGIACQDVTS), serve as a signal peptide directing secretion. N-linked (GlcNAc...) asparagine glycosylation occurs at Asn183. The segment at 421 to 544 (RYHNQNAGNQ…NQVHHSSKLH (124 aa)) is disordered. 20 repeat units span residues 424 to 428 (NQNAG), 429 to 433 (NQNAD), 434 to 438 (NQNAD), 439 to 443 (NQNAN), 444 to 448 (NQNAD), 449 to 453 (NQNAN), 454 to 458 (KQNGN), 459 to 463 (RQNDN), 464 to 468 (RQNDN), 469 to 473 (KQNGN), 474 to 478 (RQNDN), 479 to 483 (KQNGN), 484 to 488 (RQNDN), 489 to 493 (KQNGN), 494 to 498 (RQNGN), 499 to 503 (KQNDN), 504 to 508 (KQNGN), 509 to 513 (RQNDN), 514 to 518 (KRNGN), and 519 to 523 (RQNDN). Composition is skewed to low complexity over residues 424–460 (NQNA…GNRQ), 468–510 (NKQN…GNRQ), and 518–530 (NRQN…QNDN). Residues 424–523 (NQNAGNQNAD…KRNGNRQNDN (100 aa)) form a 23 X 5 AA tandem repeats of [NKR]-[RQ]-N-[AGD]-[DNG] region. One copy of the 21; half-length repeat lies at 524–525 (QN). 2 tandem repeats follow at residues 526-530 (NQNDN) and 531-535 (NRNDN).

It belongs to the major royal jelly protein family. In terms of assembly, homoligomer; in the absence of RNA, assembles into a higher-order oligomeric form, composed of around 20 monomer units. In terms of tissue distribution, found in and secreted from the hypopharyngeal glands of the worker honey bee (at protein level); expression peaks at 12 days post eclosion. Expressed in the brains of worker bees. Expressed in the brains of adult worker bees peaking at 12 days post eclosion (at protein level). Expressed in the spermatheca of adult queen bees (at protein level); Expression levels are higher in mated queens than in virgin queens. Expressed in queen bee ovaries and male drone testes. Expression in the head of forager worker bees is lower than in the heads of nurse worker bees.

The protein resides in the secreted. Its function is as follows. Abundant protein component of royal jelly, a substance produced in the hypopharyngeal gland containing proteins, free amino acids, fatty acids, sugars and other nutrients, which is fed to developing larvae by worker nurse bees. Major royal jelly proteins (MRJPs) are high in essential amino acids and probably have a nutritional function in larval food. All larvae are fed some royal jelly (also known as worker jelly) early in their development but it forms the principal source of nutrition for larvae destined to become queen bees. Secreted RNA-binding protein required to concentrate, stabilize and enhance environmental RNA bioavailability in the honey bee royal jelly. Acts as a RNA-aggregating protein: binds 18 nucleotides and longer single- and double-stranded RNA (ssRNA and dsRNA, respectively) in a non-specific manner. RNA-binding drives super-order assembly of oligomers into extracellular ribonucleoprotein granules that concentrate, protect and enhance RNA uptake granules, facilitating RNA transfer among bees. Produced in the spermatheca of adult queen bees, along with other major royal jelly proteins, where it may act as a nutrient supply for sperm stored by mated queens, or be involved in energy metabolism. The chain is Major royal jelly protein 3 from Apis mellifera (Honeybee).